The following is a 116-amino-acid chain: Large ribosomal subunit protein uL18 (116 aa).

This sequence belongs to the universal ribosomal protein uL18 family. Part of the 50S ribosomal subunit; part of the 5S rRNA/L5/L18/L25 subcomplex. Contacts the 5S and 23S rRNAs.

Functionally, this is one of the proteins that bind and probably mediate the attachment of the 5S RNA into the large ribosomal subunit, where it forms part of the central protuberance. The protein is Large ribosomal subunit protein uL18 of Ectopseudomonas mendocina (strain ymp) (Pseudomonas mendocina).